We begin with the raw amino-acid sequence, 161 residues long: Arachidonate 5-lipoxygenase-activating protein (161 aa).

At 1-8 (MDQEAVGN) the chain is on the lumenal side. A helical membrane pass occupies residues 9–30 (VVLLALVTLISVVQNAFFAHKV). Topologically, residues 31–52 (EHESKAHNGRSFQRTGTLAFER) are cytoplasmic. Residues 53 to 77 (VYTANQNCVDAYPTFLVVLWTAGLL) form a helical membrane-spanning segment. The Lumenal portion of the chain corresponds to 78-80 (CSQ). A helical membrane pass occupies residues 81 to 102 (VPAAFAGLMYLFVRQKYFVGYL). Residues 103–107 (GERTQ) are Cytoplasmic-facing. The stretch at 108–115 (STPGYIFG) is an intramembrane region. Residues 116–128 (KRIILFLFLMSFA) form a helical membrane-spanning segment. Topologically, residues 129-161 (GILNHYLIFFFGSDFENYIRTVSTTISPLLLIP) are lumenal.

The protein belongs to the MAPEG family. In terms of assembly, homotrimer. Interacts with LTC4S and ALOX5.

Its subcellular location is the nucleus membrane. The protein resides in the endoplasmic reticulum membrane. Functionally, required for leukotriene biosynthesis by ALOX5 (5-lipoxygenase). Anchors ALOX5 to the membrane. Binds arachidonic acid, and could play an essential role in the transfer of arachidonic acid to ALOX5. Binds to MK-886, a compound that blocks the biosynthesis of leukotrienes. The chain is Arachidonate 5-lipoxygenase-activating protein (Alox5ap) from Mus musculus (Mouse).